Consider the following 315-residue polypeptide: D-alanine--D-alanine ligase (315 aa).

The 197-residue stretch at 101–297 folds into the ATP-grasp domain; it reads KHIFRSLNID…FNELVKIIIE (197 aa). 128–181 is a binding site for ATP; the sequence is KIDYPYVLKPINEGSSIGVYIIFSHEDYLELKNNSSTIMEKMIVEEYIPGIELH. Mg(2+) is bound by residues Asp-249, Glu-263, and Asn-265.

This sequence belongs to the D-alanine--D-alanine ligase family. Requires Mg(2+) as cofactor. Mn(2+) serves as cofactor.

The protein resides in the cytoplasm. It carries out the reaction 2 D-alanine + ATP = D-alanyl-D-alanine + ADP + phosphate + H(+). Its pathway is cell wall biogenesis; peptidoglycan biosynthesis. Its function is as follows. Cell wall formation. The sequence is that of D-alanine--D-alanine ligase from Wolbachia pipientis wMel.